Consider the following 707-residue polypeptide: Elongation factor G (707 aa).

In terms of domain architecture, tr-type G spans 8–296; the sequence is ERYRNFGIMA…AVVDFLPAPT (289 aa). Residues 17–24, 94–98, and 148–151 each bind GTP; these read AHIDAGKT, DTPGH, and NKMD.

This sequence belongs to the TRAFAC class translation factor GTPase superfamily. Classic translation factor GTPase family. EF-G/EF-2 subfamily.

The protein resides in the cytoplasm. Its function is as follows. Catalyzes the GTP-dependent ribosomal translocation step during translation elongation. During this step, the ribosome changes from the pre-translocational (PRE) to the post-translocational (POST) state as the newly formed A-site-bound peptidyl-tRNA and P-site-bound deacylated tRNA move to the P and E sites, respectively. Catalyzes the coordinated movement of the two tRNA molecules, the mRNA and conformational changes in the ribosome. This chain is Elongation factor G, found in Paracoccus denitrificans (strain Pd 1222).